The sequence spans 493 residues: Probable cytochrome P450 313a2 (493 aa).

Heme is bound at residue Cys-438.

It belongs to the cytochrome P450 family. Heme serves as cofactor.

The protein localises to the endoplasmic reticulum membrane. Its subcellular location is the microsome membrane. In terms of biological role, may be involved in the metabolism of insect hormones and in the breakdown of synthetic insecticides. The sequence is that of Probable cytochrome P450 313a2 (Cyp313a2) from Drosophila melanogaster (Fruit fly).